The chain runs to 168 residues: Ubiquitin-fold modifier-conjugating enzyme 1 (168 aa).

Residue cysteine 116 is the Glycyl thioester intermediate of the active site.

It belongs to the ubiquitin-conjugating enzyme family. UFC1 subfamily.

E2-like enzyme which forms an intermediate with UFM1 via a thioester linkage. The sequence is that of Ubiquitin-fold modifier-conjugating enzyme 1 from Trichoplax adhaerens (Trichoplax reptans).